The following is a 308-amino-acid chain: 1,4-dihydroxy-2-naphthoate octaprenyltransferase (308 aa).

9 consecutive transmembrane segments (helical) span residues 22 to 42, 47 to 67, 101 to 121, 129 to 149, 153 to 173, 186 to 206, 235 to 255, 256 to 276, and 286 to 306; these read TLPL…WANP, GLVM…SNFA, WGLI…IGIA, FAFA…TVGV, GYMG…GVGG, IILP…INNL, ILLS…AISW, TNYL…FVYC, and ILAQ…LGLL.

The protein belongs to the MenA family. Type 1 subfamily.

Its subcellular location is the cell inner membrane. It carries out the reaction an all-trans-polyprenyl diphosphate + 1,4-dihydroxy-2-naphthoate + H(+) = a 2-demethylmenaquinol + CO2 + diphosphate. It functions in the pathway quinol/quinone metabolism; menaquinone biosynthesis; menaquinol from 1,4-dihydroxy-2-naphthoate: step 1/2. Functionally, conversion of 1,4-dihydroxy-2-naphthoate (DHNA) to demethylmenaquinone (DMK). The protein is 1,4-dihydroxy-2-naphthoate octaprenyltransferase of Haemophilus influenzae (strain ATCC 51907 / DSM 11121 / KW20 / Rd).